A 318-amino-acid polypeptide reads, in one-letter code: Ribosomal protein L11 methyltransferase (318 aa).

S-adenosyl-L-methionine is bound by residues Thr161, Gly182, Asp204, and Asn247.

This sequence belongs to the methyltransferase superfamily. PrmA family.

Its subcellular location is the cytoplasm. The catalysed reaction is L-lysyl-[protein] + 3 S-adenosyl-L-methionine = N(6),N(6),N(6)-trimethyl-L-lysyl-[protein] + 3 S-adenosyl-L-homocysteine + 3 H(+). In terms of biological role, methylates ribosomal protein L11. The sequence is that of Ribosomal protein L11 methyltransferase from Moorella thermoacetica (strain ATCC 39073 / JCM 9320).